The following is a 142-amino-acid chain: Large ribosomal subunit protein uL13 (142 aa).

It belongs to the universal ribosomal protein uL13 family. In terms of assembly, part of the 50S ribosomal subunit.

Its function is as follows. This protein is one of the early assembly proteins of the 50S ribosomal subunit, although it is not seen to bind rRNA by itself. It is important during the early stages of 50S assembly. This is Large ribosomal subunit protein uL13 from Buchnera aphidicola subsp. Schizaphis graminum (strain Sg).